Reading from the N-terminus, the 127-residue chain is uncharacterized protein (127 aa).

Residues 1-26 (MKAIYALLAVVALALVAVSLFSQSDS) form the signal peptide.

This is an uncharacterized protein from Archaeoglobus fulgidus (strain ATCC 49558 / DSM 4304 / JCM 9628 / NBRC 100126 / VC-16).